The chain runs to 388 residues: Transcriptional regulatory protein EmbR (388 aa).

The segment at residues 2-105 is a DNA-binding region (ompR/PhoB-type); it reads AGSATVEKRL…AAPPGYRLSI (104 aa). The FHA domain occupies 308 to 357; it reads TRIGRLHDNDIVLDSANVSRHHAVIVDTGTNYVINDLRSSNGVHVQHERI.

The protein belongs to the AfsR/DnrI/RedD regulatory family. In terms of processing, phosphorylated on threonine residue(s).

Functionally, positively regulates the transcription of the embCAB operon. Exhibits ATPase and GTPase activities. This chain is Transcriptional regulatory protein EmbR (embR), found in Mycobacterium bovis (strain ATCC BAA-935 / AF2122/97).